We begin with the raw amino-acid sequence, 159 residues long: 2-C-methyl-D-erythritol 2,4-cyclodiphosphate synthase (159 aa).

Residues aspartate 10 and histidine 12 each coordinate a divalent metal cation. 4-CDP-2-C-methyl-D-erythritol 2-phosphate is bound by residues 10–12 (DVH) and 36–37 (HS). Histidine 44 contacts a divalent metal cation. 4-CDP-2-C-methyl-D-erythritol 2-phosphate contacts are provided by residues 58-60 (DIG), 63-67 (FPDTD), 102-108 (AQAPKMA), 134-137 (TTTE), phenylalanine 141, and arginine 144.

Belongs to the IspF family. In terms of assembly, homotrimer. The cofactor is a divalent metal cation.

The catalysed reaction is 4-CDP-2-C-methyl-D-erythritol 2-phosphate = 2-C-methyl-D-erythritol 2,4-cyclic diphosphate + CMP. It participates in isoprenoid biosynthesis; isopentenyl diphosphate biosynthesis via DXP pathway; isopentenyl diphosphate from 1-deoxy-D-xylulose 5-phosphate: step 4/6. Functionally, involved in the biosynthesis of isopentenyl diphosphate (IPP) and dimethylallyl diphosphate (DMAPP), two major building blocks of isoprenoid compounds. Catalyzes the conversion of 4-diphosphocytidyl-2-C-methyl-D-erythritol 2-phosphate (CDP-ME2P) to 2-C-methyl-D-erythritol 2,4-cyclodiphosphate (ME-CPP) with a corresponding release of cytidine 5-monophosphate (CMP). The chain is 2-C-methyl-D-erythritol 2,4-cyclodiphosphate synthase from Shewanella sp. (strain ANA-3).